Reading from the N-terminus, the 141-residue chain is MPPKFKRHLNDDDVTGSVKSERRNLLEDDSDEEEDFFLRGPSGPRFGPRNDKIKHVQNQVDEVIDVMQENITKVIERGERLDELQDKSESLSDNATAFSNRSKQLRRQMWWRGCKIKAIMALVAVILLLVIIILIVVKYRT.

The tract at residues 1–51 (MPPKFKRHLNDDDVTGSVKSERRNLLEDDSDEEEDFFLRGPSGPRFGPRND) is disordered. The Cytoplasmic segment spans residues 1 to 115 (MPPKFKRHLN…RRQMWWRGCK (115 aa)). A phosphoserine mark is found at S17 and S30. Residues 52–112 (KIKHVQNQVD…KQLRRQMWWR (61 aa)) form the v-SNARE coiled-coil homology domain. The chain crosses the membrane as a helical; Anchor for type IV membrane protein span at residues 116-136 (IKAIMALVAVILLLVIIILIV). Topologically, residues 137 to 141 (VKYRT) are vesicular.

This sequence belongs to the synaptobrevin family. Identified in a complex containing STX6, STX12, VAMP4 and VTI1A. Interacts with BAIAP3; this interaction is increased in the presence of calcium.

It is found in the golgi apparatus. The protein resides in the trans-Golgi network membrane. Functionally, involved in the pathway that functions to remove an inhibitor (probably synaptotagmin-4) of calcium-triggered exocytosis during the maturation of secretory granules. May be a marker for this sorting pathway that is critical for remodeling the secretory response of granule. In Bos taurus (Bovine), this protein is Vesicle-associated membrane protein 4 (VAMP4).